Here is a 209-residue protein sequence, read N- to C-terminus: MNLFQNAKFFTTVNHLKDLPDTPLEIAFVGRSNAGKSSAINTLTNHVRLAYVSKTPGRTQHINFFELQNGNFMVDLPGYGYAQVPEAVRAHWVNLLGDYLQQRKQLIGLVLIMDARHPLKELDIRMLDFFHTTGRPVHILLSKADKLSKNEQIKTLSQVKKLLKPYSDRQNISVQLFSSLKKQGIDEANRTVGSWFDAADAAASSPKEN.

In terms of domain architecture, EngB-type G spans 22–198 (TPLEIAFVGR…NRTVGSWFDA (177 aa)). Mg(2+) contacts are provided by serine 37 and threonine 59.

The protein belongs to the TRAFAC class TrmE-Era-EngA-EngB-Septin-like GTPase superfamily. EngB GTPase family. Requires Mg(2+) as cofactor.

Its function is as follows. Necessary for normal cell division and for the maintenance of normal septation. This is Probable GTP-binding protein EngB from Neisseria meningitidis serogroup C (strain 053442).